The primary structure comprises 725 residues: Golgin candidate 4 (725 aa).

Positions 17-62 (HDVHDDDEDDDEDLTIYGSTNGGTDRRNSNGFRYSRSPMANGFESP) are disordered. Acidic residues predominate over residues 21-30 (DDDEDDDEDL). A coiled-coil region spans residues 66 to 132 (EIERYKAEIN…LKESRLDLSR (67 aa)). Disordered regions lie at residues 134–183 (SNNN…SHKK), 191–210 (LEER…EKER), and 311–349 (ASQK…KEDM). Polar residues predominate over residues 148–175 (NRSQRSPTNWKNRNQMNNGIASKPNGTE). 3 coiled-coil regions span residues 191 to 316 (LEER…QKST), 344 to 407 (PGKE…QTNE), and 437 to 563 (EIRK…LNRM). The span at 324 to 349 (STEDLSRHLSSLDEEKAGTFPGKEDM) shows a compositional bias: basic and acidic residues. In terms of domain architecture, GRIP spans 562-613 (RMSMDSDFLVDRRIVIKLLVTYFQRNHSREVLDLMVRMLGFSEEEKQRIGLA). A compositionally biased stretch (basic and acidic residues) spans 672-688 (ERERREAEDAANKEQEK). The interval 672–725 (ERERREAEDAANKEQEKATVSSTQRPKYEQSDSEFSTVPLTSSNSNHRLSRLLT) is disordered. Residues 711–725 (LTSSNSNHRLSRLLT) are compositionally biased toward low complexity.

The protein localises to the golgi apparatus. In terms of biological role, golgi matrix protein playing a role in tethering of vesicles to Golgi membranes and in maintaining the overall structure of the Golgi apparatus. The chain is Golgin candidate 4 (GC4) from Arabidopsis thaliana (Mouse-ear cress).